Consider the following 235-residue polypeptide: Ubiquinone biosynthesis O-methyltransferase (235 aa).

Residues Arg39, Gly59, Asp80, and Met124 each contribute to the S-adenosyl-L-methionine site.

This sequence belongs to the methyltransferase superfamily. UbiG/COQ3 family.

It carries out the reaction a 3-demethylubiquinol + S-adenosyl-L-methionine = a ubiquinol + S-adenosyl-L-homocysteine + H(+). The enzyme catalyses a 3-(all-trans-polyprenyl)benzene-1,2-diol + S-adenosyl-L-methionine = a 2-methoxy-6-(all-trans-polyprenyl)phenol + S-adenosyl-L-homocysteine + H(+). It functions in the pathway cofactor biosynthesis; ubiquinone biosynthesis. Functionally, O-methyltransferase that catalyzes the 2 O-methylation steps in the ubiquinone biosynthetic pathway. The polypeptide is Ubiquinone biosynthesis O-methyltransferase (Vibrio parahaemolyticus serotype O3:K6 (strain RIMD 2210633)).